The following is a 512-amino-acid chain: MSAMPTLVLHPGRVTLAELRAIAAGGQRLALDASALAGMRASQATVDRIALEEQVVYGINTGFGKLASTKIAHDRLAELQRNLVLSHSVGTGDPLPDGVVRMVLATKAVSLARGHSGVRPALVDALLALANADVLPVIPAKGSVGASGDLAPLAHLACVLIGEGAAQVGGRIVTGREAMAAVGLEPFVLGPKEGLALLNGTQVSTALALAGLFAAENVFAAGLVSGCLTLEAIKGSVKPFDARIHEARGQAGQIAVAAAVRALLEGSAIDPSHPDCGRVQDPYSIRCVPQVMGACLDNLSHAARVLQIEANAASDNPLVFTDTGEVISGGNFHAEPVAFAADIIALALSEIGAISERRLALLLDTGLSGLPAFLIRDSGVNSGFMIAQVTAAALAAENQCLAHPSSVTSLPTSANQEDHVSMATYAARRLLDMARNTAVIVGIEAMAAAQGMEFDRSLKSSPLIEAQFAAIRGRVAFLEQDRYLAPDIEAMRLWASTSAWPAPLAACLPSFQ.

Residues 146–148 (ASG) constitute a cross-link (5-imidazolinone (Ala-Gly)). Serine 147 bears the 2,3-didehydroalanine (Ser) mark.

The protein belongs to the PAL/histidase family. Post-translationally, contains an active site 4-methylidene-imidazol-5-one (MIO), which is formed autocatalytically by cyclization and dehydration of residues Ala-Ser-Gly.

Its subcellular location is the cytoplasm. It carries out the reaction L-histidine = trans-urocanate + NH4(+). It functions in the pathway amino-acid degradation; L-histidine degradation into L-glutamate; N-formimidoyl-L-glutamate from L-histidine: step 1/3. This chain is Histidine ammonia-lyase, found in Paracidovorax citrulli (strain AAC00-1) (Acidovorax citrulli).